The sequence spans 87 residues: Phosphoribosyl-ATP pyrophosphatase (87 aa).

It belongs to the PRA-PH family.

It is found in the cytoplasm. It carries out the reaction 1-(5-phospho-beta-D-ribosyl)-ATP + H2O = 1-(5-phospho-beta-D-ribosyl)-5'-AMP + diphosphate + H(+). It functions in the pathway amino-acid biosynthesis; L-histidine biosynthesis; L-histidine from 5-phospho-alpha-D-ribose 1-diphosphate: step 2/9. The polypeptide is Phosphoribosyl-ATP pyrophosphatase (Bifidobacterium animalis subsp. lactis (strain AD011)).